A 475-amino-acid chain; its full sequence is Ribonuclease Y (475 aa).

Positions E34–R73 are disordered. The KH domain maps to T165–L228. Positions V291–A384 constitute an HD domain.

It belongs to the RNase Y family.

In terms of biological role, endoribonuclease that initiates mRNA decay. In Alkaliphilus metalliredigens (strain QYMF), this protein is Ribonuclease Y.